We begin with the raw amino-acid sequence, 155 residues long: 6,7-dimethyl-8-ribityllumazine synthase (155 aa).

Residues Phe-23, 57 to 59 (AYE), and 81 to 83 (AVI) each bind 5-amino-6-(D-ribitylamino)uracil. 86–87 (AT) lines the (2S)-2-hydroxy-3-oxobutyl phosphate pocket. The active-site Proton donor is the His-89. Residue Phe-114 participates in 5-amino-6-(D-ribitylamino)uracil binding. Arg-128 contacts (2S)-2-hydroxy-3-oxobutyl phosphate.

Belongs to the DMRL synthase family.

The catalysed reaction is (2S)-2-hydroxy-3-oxobutyl phosphate + 5-amino-6-(D-ribitylamino)uracil = 6,7-dimethyl-8-(1-D-ribityl)lumazine + phosphate + 2 H2O + H(+). The protein operates within cofactor biosynthesis; riboflavin biosynthesis; riboflavin from 2-hydroxy-3-oxobutyl phosphate and 5-amino-6-(D-ribitylamino)uracil: step 1/2. In terms of biological role, catalyzes the formation of 6,7-dimethyl-8-ribityllumazine by condensation of 5-amino-6-(D-ribitylamino)uracil with 3,4-dihydroxy-2-butanone 4-phosphate. This is the penultimate step in the biosynthesis of riboflavin. The protein is 6,7-dimethyl-8-ribityllumazine synthase of Desulfotalea psychrophila (strain LSv54 / DSM 12343).